The sequence spans 536 residues: MAVASKKIPAPDEVRIKTALLSVSDKTGIVELARALNDKGIRLISTGGTHKALADAGLPVSDVSELTGFPEIMDGRVKTLHPGVHGGLLAIRDDAEHADAMSAHGITAIDLAVINLYPFEEVRAKGGDYPTTVENIDIGGPAMIRASAKNHAYVTIVTDPADYSPLLEEIADGATRYAFRQKMAAKAYARTAAYDATISNWFAEVLDTPMPRHRVLGGLLREEMRYGENPHQKAGFYVTGEKRPGVATAALLQGKQLSYNNINDTDAAFELVAEFLPEKAPACAIIKHANPCGVATAPSLAEAYRRALACDSTSAFGGIIALNQELDAETAEEIVKLFTEVIIAPSVSDDAKAVIARKPNLRLLAAGGLPDPRTPGLTAKTVAGGVLVQTRDNGMVEDLELKVVTKRAPTAQELEDMKFAFKVAKHVKSNAIVYAKDGQTAGIGAGQMSRVDSARIAAIKAEEAAKAMGLAEPLTRGSAVASEAFLPFADGLLSAIAAGATAVIQPGGSMRDEEVIAAANEHDVAMVFTGMRHFRH.

An MGS-like domain is found at 8–158; that stretch reads IPAPDEVRIK…KNHAYVTIVT (151 aa).

This sequence belongs to the PurH family.

The catalysed reaction is (6R)-10-formyltetrahydrofolate + 5-amino-1-(5-phospho-beta-D-ribosyl)imidazole-4-carboxamide = 5-formamido-1-(5-phospho-D-ribosyl)imidazole-4-carboxamide + (6S)-5,6,7,8-tetrahydrofolate. It catalyses the reaction IMP + H2O = 5-formamido-1-(5-phospho-D-ribosyl)imidazole-4-carboxamide. Its pathway is purine metabolism; IMP biosynthesis via de novo pathway; 5-formamido-1-(5-phospho-D-ribosyl)imidazole-4-carboxamide from 5-amino-1-(5-phospho-D-ribosyl)imidazole-4-carboxamide (10-formyl THF route): step 1/1. It functions in the pathway purine metabolism; IMP biosynthesis via de novo pathway; IMP from 5-formamido-1-(5-phospho-D-ribosyl)imidazole-4-carboxamide: step 1/1. This is Bifunctional purine biosynthesis protein PurH from Rhizobium meliloti (strain 1021) (Ensifer meliloti).